The primary structure comprises 114 residues: DNA polymerase epsilon subunit C (114 aa).

Positions 91-114 are disordered; sequence PDAVAPATGEEEQPKRRGRKPAQE.

As to quaternary structure, heterotetramer. Consists of four subunits: POL2, DPB2, DPB3 and DPB4.

The protein localises to the nucleus. In terms of biological role, as accessory component of the DNA polymerase epsilon (DNA polymerase II) participates in chromosomal DNA replication. The protein is DNA polymerase epsilon subunit C (DPB3) of Yarrowia lipolytica (strain CLIB 122 / E 150) (Yeast).